The following is a 252-amino-acid chain: Serine/threonine phosphatase stp (252 aa).

The span at 1 to 18 shows a compositional bias: basic and acidic residues; that stretch reads MHAEFRTDRGRIRHHNED. The segment at 1–23 is disordered; it reads MHAEFRTDRGRIRHHNEDNGGVF. The PPM-type phosphatase domain maps to 2-242; sequence HAEFRTDRGR…DNITVLLVER (241 aa). D36, G37, D194, and D233 together coordinate Mn(2+).

It belongs to the PP2C family. The cofactor is Mn(2+).

Its subcellular location is the cytoplasm. The protein resides in the membrane. It catalyses the reaction O-phospho-L-seryl-[protein] + H2O = L-seryl-[protein] + phosphate. The enzyme catalyses O-phospho-L-threonyl-[protein] + H2O = L-threonyl-[protein] + phosphate. Its activity is regulated as follows. Activity not affected by inhibitors of phosphatases of the PPP family such as okadaic acid and cypermethrin, or by inhibitors of phosphatases of the PTP family such as sodium orthovanadate. Functionally, protein phosphatase that dephosphorylates EF-Tu. The polypeptide is Serine/threonine phosphatase stp (stp) (Listeria monocytogenes serovar 1/2a (strain ATCC BAA-679 / EGD-e)).